A 1902-amino-acid chain; its full sequence is PI-type proteinase (1902 aa).

A signal peptide spans 1–33 (MQRKKKGLSILLAGTVALGALAVLPVGEIQAKA). Residues 34–187 (AISQQTKGSS…VTLAKVYYPT (154 aa)) constitute a propeptide that is removed on maturation. A Peptidase S8 domain is found at 191–697 (ANSMANVQAV…AGLVDVKAAI (507 aa)). Residues aspartate 217, histidine 281, and serine 620 each act as charge relay system in the active site. Residues 1796 to 1874 (GKGDGTTGTS…GALPKTGETT (79 aa)) form a disordered region. Over residues 1797–1812 (KGDGTTGTSDKGGGQG) the composition is skewed to gly residues. Residues 1830 to 1843 (SQPSSGGNIPTNPA) are compositionally biased toward polar residues. Positions 1867-1871 (LPKTG) match the LPXTG sorting signal motif. Threonine 1870 carries the pentaglycyl murein peptidoglycan amidated threonine modification. Residues 1871–1902 (GETTERPAFGFLGVIVVILMGVLGLKRKQREE) constitute a propeptide, removed by sortase.

It belongs to the peptidase S8 family.

Its subcellular location is the secreted. The protein resides in the cell wall. It carries out the reaction Endopeptidase activity with very broad specificity, although some subsite preference have been noted, e.g. large hydrophobic residues in the P1 and P4 positions, and Pro in the P2 position. Best known for its action on caseins, although it has been shown to hydrolyze hemoglobin and oxidized insulin B-chain.. Protease which breaks down milk proteins during the growth of the bacteria on milk. The chain is PI-type proteinase (prtP) from Lactococcus lactis subsp. cremoris (Streptococcus cremoris).